A 494-amino-acid chain; its full sequence is UPF0371 protein SPCG_0344 (494 aa).

It belongs to the UPF0371 family.

This chain is UPF0371 protein SPCG_0344, found in Streptococcus pneumoniae (strain CGSP14).